A 312-amino-acid polypeptide reads, in one-letter code: Aldehyde reductase YPR1 (312 aa).

Y56 functions as the Proton donor in the catalytic mechanism. H112 contributes to the substrate binding site. An NADP(+)-binding site is contributed by 220–274; sequence SPFGSANAPLLKEQAIIDMAKKHGVEPAQLIISWSIQRGYVVLAKSVNPERIVSN.

The protein belongs to the aldo/keto reductase family.

The protein localises to the cytoplasm. The enzyme catalyses a primary alcohol + NADP(+) = an aldehyde + NADPH + H(+). It carries out the reaction 2-methylbutan-1-ol + NADP(+) = 2-methylbutanal + NADPH + H(+). It catalyses the reaction hexan-1-ol + NADP(+) = hexanal + NADPH + H(+). Aldehyde reductase with broad substrate specificity, catalyzing the NADPH-dependent reduction of aldehydes into the corresponding alcohols. In vitro, displays high specific activity towards 2-methylbutanal (2-methylbutyraldehyde), as well as other aldehydes such as hexanal (a toxic lipid peroxidation product and phytoalexin), but exhibits extremely low activity as a glycerol dehydrogenase. Seems to contribute to 2-methylbutanal reduction in vivo, and may therefore play a role in isoleucine catabolism and fusel alcohol formation. In Saccharomyces cerevisiae (strain ATCC 204508 / S288c) (Baker's yeast), this protein is Aldehyde reductase YPR1 (YPR1).